The sequence spans 453 residues: tRNA-2-methylthio-N(6)-dimethylallyladenosine synthase (453 aa).

One can recognise an MTTase N-terminal domain in the interval 4 to 118 (KKFYIENYGC…IPNLINNFFK (115 aa)). Residues cysteine 13, cysteine 49, cysteine 83, cysteine 156, cysteine 160, and cysteine 163 each coordinate [4Fe-4S] cluster. The Radical SAM core domain maps to 142-388 (EEKKITAFVT…NLQKTHSYYR (247 aa)). Positions 390–453 (RKYIGSIQDI…SATLVGDIYV (64 aa)) constitute a TRAM domain.

This sequence belongs to the methylthiotransferase family. MiaB subfamily. As to quaternary structure, monomer. [4Fe-4S] cluster serves as cofactor.

It is found in the cytoplasm. The catalysed reaction is N(6)-dimethylallyladenosine(37) in tRNA + (sulfur carrier)-SH + AH2 + 2 S-adenosyl-L-methionine = 2-methylsulfanyl-N(6)-dimethylallyladenosine(37) in tRNA + (sulfur carrier)-H + 5'-deoxyadenosine + L-methionine + A + S-adenosyl-L-homocysteine + 2 H(+). In terms of biological role, catalyzes the methylthiolation of N6-(dimethylallyl)adenosine (i(6)A), leading to the formation of 2-methylthio-N6-(dimethylallyl)adenosine (ms(2)i(6)A) at position 37 in tRNAs that read codons beginning with uridine. In Karelsulcia muelleri (strain GWSS) (Sulcia muelleri), this protein is tRNA-2-methylthio-N(6)-dimethylallyladenosine synthase.